The sequence spans 256 residues: tRNA-cytidine(32) 2-sulfurtransferase 1 (256 aa).

Positions 38-43 (SGGKDS) match the PP-loop motif motif. [4Fe-4S] cluster contacts are provided by Cys113, Cys116, and Cys204.

The protein belongs to the TtcA family. As to quaternary structure, homodimer. The cofactor is Mg(2+). [4Fe-4S] cluster is required as a cofactor.

The protein resides in the cytoplasm. The catalysed reaction is cytidine(32) in tRNA + S-sulfanyl-L-cysteinyl-[cysteine desulfurase] + AH2 + ATP = 2-thiocytidine(32) in tRNA + L-cysteinyl-[cysteine desulfurase] + A + AMP + diphosphate + H(+). The protein operates within tRNA modification. In terms of biological role, catalyzes the ATP-dependent 2-thiolation of cytidine in position 32 of tRNA, to form 2-thiocytidine (s(2)C32). The sulfur atoms are provided by the cysteine/cysteine desulfurase (IscS) system. The sequence is that of tRNA-cytidine(32) 2-sulfurtransferase 1 from Francisella philomiragia subsp. philomiragia (strain ATCC 25017 / CCUG 19701 / FSC 153 / O#319-036).